Reading from the N-terminus, the 108-residue chain is ATPase inhibitor, mitochondrial (108 aa).

A mitochondrion-targeting transit peptide spans 1–25 (MAATALAVRSRIGAWSVWAMQSRGF). The tract at residues 25-48 (FSSDTPEGVRSGAGAVRDAGGAFG) is disordered. The interval 26 to 52 (SSDTPEGVRSGAGAVRDAGGAFGKKEQ) is N-terminal inhibitory region. The stretch at 69–108 (ALKKHHENEISHHVKEIERLQKEIERHKQSIKKLKNDDDD) forms a coiled coil. Residues 74-106 (HENEISHHVKEIERLQKEIERHKQSIKKLKNDD) are antiparallel alpha-helical coiled coil region. The residue at position 103 (K103) is an N6-succinyllysine.

It belongs to the ATPase inhibitor family. Homodimer; represents the active form and is present at a pH value below 6.5. Homotetramer; represents the inactive form and is present at a pH value above 7.0.

The protein localises to the mitochondrion. Functionally, endogenous F(1)F(o)-ATPase inhibitor limiting ATP depletion when the mitochondrial membrane potential falls below a threshold and the F(1)F(o)-ATP synthase starts hydrolyzing ATP to pump protons out of the mitochondrial matrix. Required to avoid the consumption of cellular ATP when the F(1)F(o)-ATP synthase enzyme acts as an ATP hydrolase. Indirectly acts as a regulator of heme synthesis in erythroid tissues: regulates heme synthesis by modulating the mitochondrial pH and redox potential, allowing FECH to efficiently catalyze the incorporation of iron into protoporphyrin IX to produce heme. The chain is ATPase inhibitor, mitochondrial from Sus scrofa (Pig).